Reading from the N-terminus, the 489-residue chain is Betaine aldehyde dehydrogenase (489 aa).

2 residues coordinate K(+): threonine 26 and aspartate 93. Position 150 to 152 (150 to 152 (GAW)) interacts with NAD(+). Catalysis depends on lysine 162, which acts as the Charge relay system. 176 to 179 (KPSE) serves as a coordination point for NAD(+). Valine 180 serves as a coordination point for K(+). Residue 229 to 232 (GVET) participates in NAD(+) binding. Leucine 245 lines the K(+) pocket. The Proton acceptor role is filled by glutamate 251. NAD(+) contacts are provided by glycine 253, cysteine 285, and glutamate 386. Residue cysteine 285 is the Nucleophile of the active site. Cysteine 285 bears the Cysteine sulfenic acid (-SOH) mark. K(+) is bound by residues lysine 456 and glycine 459. Residue glutamate 463 is the Charge relay system of the active site.

This sequence belongs to the aldehyde dehydrogenase family. In terms of assembly, dimer of dimers. The cofactor is K(+).

It catalyses the reaction betaine aldehyde + NAD(+) + H2O = glycine betaine + NADH + 2 H(+). It functions in the pathway amine and polyamine biosynthesis; betaine biosynthesis via choline pathway; betaine from betaine aldehyde: step 1/1. Its function is as follows. Involved in the biosynthesis of the osmoprotectant glycine betaine. Catalyzes the irreversible oxidation of betaine aldehyde to the corresponding acid. This chain is Betaine aldehyde dehydrogenase, found in Burkholderia ambifaria (strain MC40-6).